Here is a 79-residue protein sequence, read N- to C-terminus: Acyl carrier protein (79 aa).

The Carrier domain maps to 1–76 (MEVFEEVRDV…DVVTYIENLN (76 aa)). Serine 36 is subject to O-(pantetheine 4'-phosphoryl)serine.

Belongs to the acyl carrier protein (ACP) family. 4'-phosphopantetheine is transferred from CoA to a specific serine of apo-ACP by AcpS. This modification is essential for activity because fatty acids are bound in thioester linkage to the sulfhydryl of the prosthetic group.

It is found in the cytoplasm. It functions in the pathway lipid metabolism; fatty acid biosynthesis. In terms of biological role, carrier of the growing fatty acid chain in fatty acid biosynthesis. The protein is Acyl carrier protein of Campylobacter hominis (strain ATCC BAA-381 / DSM 21671 / CCUG 45161 / LMG 19568 / NCTC 13146 / CH001A).